Consider the following 294-residue polypeptide: tRNA dimethylallyltransferase (294 aa).

9 to 16 is an ATP binding site; that stretch reads GATATGKS. Position 11–16 (11–16) interacts with substrate; sequence TATGKS. Residues 34–37 are interaction with substrate tRNA; that stretch reads DSRQ.

This sequence belongs to the IPP transferase family. In terms of assembly, monomer. Mg(2+) is required as a cofactor.

It catalyses the reaction adenosine(37) in tRNA + dimethylallyl diphosphate = N(6)-dimethylallyladenosine(37) in tRNA + diphosphate. Its function is as follows. Catalyzes the transfer of a dimethylallyl group onto the adenine at position 37 in tRNAs that read codons beginning with uridine, leading to the formation of N6-(dimethylallyl)adenosine (i(6)A). The sequence is that of tRNA dimethylallyltransferase from Trichormus variabilis (strain ATCC 29413 / PCC 7937) (Anabaena variabilis).